Reading from the N-terminus, the 342-residue chain is tRNA N6-adenosine threonylcarbamoyltransferase (342 aa).

Histidine 111 and histidine 115 together coordinate Fe cation. Substrate is bound by residues 134-138, aspartate 167, glycine 180, and asparagine 276; that span reads LVSGG. Aspartate 304 provides a ligand contact to Fe cation.

Belongs to the KAE1 / TsaD family. It depends on Fe(2+) as a cofactor.

The protein resides in the cytoplasm. It carries out the reaction L-threonylcarbamoyladenylate + adenosine(37) in tRNA = N(6)-L-threonylcarbamoyladenosine(37) in tRNA + AMP + H(+). Required for the formation of a threonylcarbamoyl group on adenosine at position 37 (t(6)A37) in tRNAs that read codons beginning with adenine. Is involved in the transfer of the threonylcarbamoyl moiety of threonylcarbamoyl-AMP (TC-AMP) to the N6 group of A37, together with TsaE and TsaB. TsaD likely plays a direct catalytic role in this reaction. The protein is tRNA N6-adenosine threonylcarbamoyltransferase of Helicobacter acinonychis (strain Sheeba).